A 296-amino-acid chain; its full sequence is MTNRIPIASPVRTAAIVNRYFVHAKKNLGQNFLVDLDAVQGIVRAAGIEPGDQVVEVGPGIGSLTEQLLLAGGKVAAYEVDQSLPEILANELPEKVDGQDLDQRFKLIMKDVLKADFATDLAGFFDLSKPVKVVANLPYYITTPIIFNLLESSLDFTSLTLMMQKEVAERLAAQPGSKAYGPLSIAVQTQMSVDLALEVGHASFMPQPKVDSAVVVLTPLEKPADVGDRKQFNRVVKLCFAQRRKTLANNLKTLLPDKEDREKLLADLDLDPRQRPEQLAISDFIRISQAIAEMNK.

S-adenosyl-L-methionine-binding residues include Asn-31, Leu-33, Gly-58, Glu-79, Asp-111, and Asn-136.

It belongs to the class I-like SAM-binding methyltransferase superfamily. rRNA adenine N(6)-methyltransferase family. RsmA subfamily.

It is found in the cytoplasm. It catalyses the reaction adenosine(1518)/adenosine(1519) in 16S rRNA + 4 S-adenosyl-L-methionine = N(6)-dimethyladenosine(1518)/N(6)-dimethyladenosine(1519) in 16S rRNA + 4 S-adenosyl-L-homocysteine + 4 H(+). Specifically dimethylates two adjacent adenosines (A1518 and A1519) in the loop of a conserved hairpin near the 3'-end of 16S rRNA in the 30S particle. May play a critical role in biogenesis of 30S subunits. The chain is Ribosomal RNA small subunit methyltransferase A from Lactobacillus delbrueckii subsp. bulgaricus (strain ATCC BAA-365 / Lb-18).